The chain runs to 329 residues: MTHFNKGPSYGLSAEVKNKIASKYDHQAEEDLRNWIEEVTGMSIGANFQLGLKDGIILCELINKLQPGSVKKVNESSLNWPQLENIGNFIKAIQAYGMKPHDIFEANDLFENGNMTQVQTTLVALAGLAKTKGFHTTIDIGVKYAEKQTRRFDEGKLKAGQSVIGLQMGTNKCASQAGMTAYGTRRHLYDPKMQTDKPFDQTTISLQMGTNKGASQAGMLAPGTRRDIYDQKLTLQPVDNSTISLQMGTNKVASQKGMSVYGLGRQVYDPKYCAAPTEPVIHNGSQGTGTNGSEISDSDYQAEYPDEYHGEYQDDYPRDYQYGDQGIDY.

An N6-acetyllysine modification is found at Lys-23. The region spanning 26–130 is the Calponin-homology (CH) domain; that stretch reads HQAEEDLRNW…TLVALAGLAK (105 aa). Lys-158 is subject to N6-methyllysine. Calponin-like repeat units follow at residues 164–189, 204–229, and 243–268; these read IGLQMGTNKCASQAGMTAYGTRRHLY, ISLQMGTNKGASQAGMLAPGTRRDIY, and ISLQMGTNKVASQKGMSVYGLGRQVY. The segment at 280–329 is disordered; that stretch reads VIHNGSQGTGTNGSEISDSDYQAEYPDEYHGEYQDDYPRDYQYGDQGIDY. Residues 306–318 show a composition bias toward basic and acidic residues; the sequence is DEYHGEYQDDYPR.

The protein belongs to the calponin family.

Functionally, thin filament-associated protein that is implicated in the regulation and modulation of smooth muscle contraction. It is capable of binding to actin, calmodulin and tropomyosin. The interaction of calponin with actin inhibits the actomyosin Mg-ATPase activity. This chain is Calponin-3 (CNN3), found in Bos taurus (Bovine).